We begin with the raw amino-acid sequence, 435 residues long: Putative F-box/FBD/LRR-repeat protein At5g56810 (435 aa).

The F-box domain maps to 14–62; sequence PDRISQLPNDLLFRILSLIPVSDAMSTSLLSKRWKSVWKMLPTLVYNEN. 6 LRR repeats span residues 64–95, 146–173, 174–199, 222–248, 266–291, and 316–341; these read CSNI…TLEL, LKLQ…YLTC, VNFE…FLQR, KEQA…NIFD, SVRV…SLDL, and YDNF…KLNH. The FBD domain maps to 353-404; it reads CSVSEPSSVPECLSFHLETFQWIGYAGTFEEIAAAVYVLKNARCLKNATISL.

This chain is Putative F-box/FBD/LRR-repeat protein At5g56810, found in Arabidopsis thaliana (Mouse-ear cress).